The sequence spans 382 residues: Succinyl-diaminopimelate desuccinylase (382 aa).

H73 contacts Zn(2+). Residue D75 is part of the active site. D106 contributes to the Zn(2+) binding site. E140 (proton acceptor) is an active-site residue. Zn(2+)-binding residues include E141, E169, and H355.

Belongs to the peptidase M20A family. DapE subfamily. In terms of assembly, homodimer. The cofactor is Zn(2+). Requires Co(2+) as cofactor.

It carries out the reaction N-succinyl-(2S,6S)-2,6-diaminopimelate + H2O = (2S,6S)-2,6-diaminopimelate + succinate. It functions in the pathway amino-acid biosynthesis; L-lysine biosynthesis via DAP pathway; LL-2,6-diaminopimelate from (S)-tetrahydrodipicolinate (succinylase route): step 3/3. Catalyzes the hydrolysis of N-succinyl-L,L-diaminopimelic acid (SDAP), forming succinate and LL-2,6-diaminopimelate (DAP), an intermediate involved in the bacterial biosynthesis of lysine and meso-diaminopimelic acid, an essential component of bacterial cell walls. The polypeptide is Succinyl-diaminopimelate desuccinylase (Leptothrix cholodnii (strain ATCC 51168 / LMG 8142 / SP-6) (Leptothrix discophora (strain SP-6))).